We begin with the raw amino-acid sequence, 105 residues long: Large ribosomal subunit protein bL21c (105 aa).

The protein belongs to the bacterial ribosomal protein bL21 family. In terms of assembly, part of the 50S ribosomal subunit.

The protein resides in the plastid. Its subcellular location is the chloroplast. Functionally, this protein binds to 23S rRNA. This is Large ribosomal subunit protein bL21c from Phaeodactylum tricornutum (strain CCAP 1055/1).